Reading from the N-terminus, the 604-residue chain is Glutamine--fructose-6-phosphate aminotransferase [isomerizing] (604 aa).

Cysteine 2 functions as the Nucleophile; for GATase activity in the catalytic mechanism. The region spanning 2–218 (CGIVGVVGNT…DKELVIVKKD (217 aa)) is the Glutamine amidotransferase type-2 domain. SIS domains lie at 284-423 (IIKS…ANGK) and 456-594 (VEQL…VDKP). Lysine 599 (for Fru-6P isomerization activity) is an active-site residue.

In terms of assembly, homodimer.

Its subcellular location is the cytoplasm. It carries out the reaction D-fructose 6-phosphate + L-glutamine = D-glucosamine 6-phosphate + L-glutamate. Functionally, catalyzes the first step in hexosamine metabolism, converting fructose-6P into glucosamine-6P using glutamine as a nitrogen source. The chain is Glutamine--fructose-6-phosphate aminotransferase [isomerizing] from Streptococcus agalactiae serotype V (strain ATCC BAA-611 / 2603 V/R).